The sequence spans 716 residues: Fatty acid oxidation complex subunit alpha (716 aa).

The segment at M1–A189 is enoyl-CoA hydratase/isomerase. Residue D296 coordinates substrate. Residues Q311–A716 form a 3-hydroxyacyl-CoA dehydrogenase region. Residues M324, D343, V400–E402, K407, and S429 each bind NAD(+). H450 serves as the catalytic For 3-hydroxyacyl-CoA dehydrogenase activity. An NAD(+)-binding site is contributed by N453. Substrate is bound by residues N500 and Y660.

It in the N-terminal section; belongs to the enoyl-CoA hydratase/isomerase family. The protein in the C-terminal section; belongs to the 3-hydroxyacyl-CoA dehydrogenase family. In terms of assembly, heterotetramer of two alpha chains (FadB) and two beta chains (FadA).

The catalysed reaction is a (3S)-3-hydroxyacyl-CoA + NAD(+) = a 3-oxoacyl-CoA + NADH + H(+). The enzyme catalyses a (3S)-3-hydroxyacyl-CoA = a (2E)-enoyl-CoA + H2O. It catalyses the reaction a 4-saturated-(3S)-3-hydroxyacyl-CoA = a (3E)-enoyl-CoA + H2O. It carries out the reaction (3S)-3-hydroxybutanoyl-CoA = (3R)-3-hydroxybutanoyl-CoA. The catalysed reaction is a (3Z)-enoyl-CoA = a 4-saturated (2E)-enoyl-CoA. The enzyme catalyses a (3E)-enoyl-CoA = a 4-saturated (2E)-enoyl-CoA. The protein operates within lipid metabolism; fatty acid beta-oxidation. Functionally, involved in the aerobic and anaerobic degradation of long-chain fatty acids via beta-oxidation cycle. Catalyzes the formation of 3-oxoacyl-CoA from enoyl-CoA via L-3-hydroxyacyl-CoA. It can also use D-3-hydroxyacyl-CoA and cis-3-enoyl-CoA as substrate. This is Fatty acid oxidation complex subunit alpha from Shewanella loihica (strain ATCC BAA-1088 / PV-4).